Here is an 82-residue protein sequence, read N- to C-terminus: MENVLGFVALAAGLIIGLGAIGACIGIGIMGSKYLEASARQPELMNALQTKMFLLAGLIDAAFLIGVGIAMMFAFANPFQLV.

2 consecutive transmembrane segments (helical) span residues 7-27 (FVAL…CIGI) and 53-73 (FLLA…AMMF).

Belongs to the ATPase C chain family. F-type ATPases have 2 components, F(1) - the catalytic core - and F(0) - the membrane proton channel. F(1) has five subunits: alpha(3), beta(3), gamma(1), delta(1), epsilon(1). F(0) has three main subunits: a(1), b(2) and c(10-14). The alpha and beta chains form an alternating ring which encloses part of the gamma chain. F(1) is attached to F(0) by a central stalk formed by the gamma and epsilon chains, while a peripheral stalk is formed by the delta and b chains.

Its subcellular location is the cell inner membrane. In terms of biological role, f(1)F(0) ATP synthase produces ATP from ADP in the presence of a proton or sodium gradient. F-type ATPases consist of two structural domains, F(1) containing the extramembraneous catalytic core and F(0) containing the membrane proton channel, linked together by a central stalk and a peripheral stalk. During catalysis, ATP synthesis in the catalytic domain of F(1) is coupled via a rotary mechanism of the central stalk subunits to proton translocation. Its function is as follows. Key component of the F(0) channel; it plays a direct role in translocation across the membrane. A homomeric c-ring of between 10-14 subunits forms the central stalk rotor element with the F(1) delta and epsilon subunits. The polypeptide is ATP synthase subunit c (Aromatoleum aromaticum (strain DSM 19018 / LMG 30748 / EbN1) (Azoarcus sp. (strain EbN1))).